The chain runs to 68 residues: Large ribosomal subunit protein uL29 (68 aa).

Belongs to the universal ribosomal protein uL29 family.

The protein is Large ribosomal subunit protein uL29 (rpl29) of Pyrococcus horikoshii (strain ATCC 700860 / DSM 12428 / JCM 9974 / NBRC 100139 / OT-3).